We begin with the raw amino-acid sequence, 286 residues long: Urease accessory protein UreD 2 (286 aa).

Belongs to the UreD family. In terms of assembly, ureD, UreF and UreG form a complex that acts as a GTP-hydrolysis-dependent molecular chaperone, activating the urease apoprotein by helping to assemble the nickel containing metallocenter of UreC. The UreE protein probably delivers the nickel.

Its subcellular location is the cytoplasm. In terms of biological role, required for maturation of urease via the functional incorporation of the urease nickel metallocenter. This chain is Urease accessory protein UreD 2, found in Bradyrhizobium sp. (strain BTAi1 / ATCC BAA-1182).